Here is an 89-residue protein sequence, read N- to C-terminus: Small ribosomal subunit protein uS15 (89 aa).

It belongs to the universal ribosomal protein uS15 family. As to quaternary structure, part of the 30S ribosomal subunit. Forms a bridge to the 50S subunit in the 70S ribosome, contacting the 23S rRNA.

In terms of biological role, one of the primary rRNA binding proteins, it binds directly to 16S rRNA where it helps nucleate assembly of the platform of the 30S subunit by binding and bridging several RNA helices of the 16S rRNA. Forms an intersubunit bridge (bridge B4) with the 23S rRNA of the 50S subunit in the ribosome. The polypeptide is Small ribosomal subunit protein uS15 (Azotobacter vinelandii (strain DJ / ATCC BAA-1303)).